A 450-amino-acid chain; its full sequence is Trehalose/maltose-binding protein MalE (450 aa).

The N-terminal stretch at Met1–Gly24 is a signal peptide. Residues Glu57, Thr84, Arg89, Asp110, Tyr161, Asp163, Tyr217, Glu279, Trp297, Tyr299, Gly334, Trp335, Trp371, and Arg404 each coordinate alpha,alpha-trehalose.

It belongs to the bacterial solute-binding protein 1 family. The complex is composed of two ATP-binding proteins (MalK), two transmembrane proteins (MalG and MalF) and a solute-binding protein (MalE). Post-translationally, glycosylated.

The protein localises to the cell membrane. Its function is as follows. Part of the ABC transporter complex MalEFGK involved in trehalose/maltose import. Binds maltose and trehalose. The protein is Trehalose/maltose-binding protein MalE (malE) of Thermococcus litoralis (strain ATCC 51850 / DSM 5473 / JCM 8560 / NS-C).